Here is a 230-residue protein sequence, read N- to C-terminus: Enolase-phosphatase E1 (230 aa).

Belongs to the HAD-like hydrolase superfamily. MasA/MtnC family. Monomer. Mg(2+) serves as cofactor.

The catalysed reaction is 5-methylsulfanyl-2,3-dioxopentyl phosphate + H2O = 1,2-dihydroxy-5-(methylsulfanyl)pent-1-en-3-one + phosphate. It functions in the pathway amino-acid biosynthesis; L-methionine biosynthesis via salvage pathway; L-methionine from S-methyl-5-thio-alpha-D-ribose 1-phosphate: step 3/6. It participates in amino-acid biosynthesis; L-methionine biosynthesis via salvage pathway; L-methionine from S-methyl-5-thio-alpha-D-ribose 1-phosphate: step 4/6. Its function is as follows. Bifunctional enzyme that catalyzes the enolization of 2,3-diketo-5-methylthiopentyl-1-phosphate (DK-MTP-1-P) into the intermediate 2-hydroxy-3-keto-5-methylthiopentenyl-1-phosphate (HK-MTPenyl-1-P), which is then dephosphorylated to form the acireductone 1,2-dihydroxy-3-keto-5-methylthiopentene (DHK-MTPene). This chain is Enolase-phosphatase E1, found in Sulfurihydrogenibium sp. (strain YO3AOP1).